Reading from the N-terminus, the 135-residue chain is Large ribosomal subunit protein uL16c (135 aa).

Belongs to the universal ribosomal protein uL16 family. As to quaternary structure, part of the 50S ribosomal subunit.

Its subcellular location is the plastid. It is found in the chloroplast. This Morus indica (Mulberry) protein is Large ribosomal subunit protein uL16c.